The primary structure comprises 230 residues: Cytidylate kinase (230 aa).

Residue Gly12–Thr20 coordinates ATP.

This sequence belongs to the cytidylate kinase family. Type 1 subfamily.

It is found in the cytoplasm. It catalyses the reaction CMP + ATP = CDP + ADP. It carries out the reaction dCMP + ATP = dCDP + ADP. The polypeptide is Cytidylate kinase (Aeromonas hydrophila subsp. hydrophila (strain ATCC 7966 / DSM 30187 / BCRC 13018 / CCUG 14551 / JCM 1027 / KCTC 2358 / NCIMB 9240 / NCTC 8049)).